The sequence spans 240 residues: 3-deoxy-D-manno-octulosonic acid kinase (240 aa).

Residue D170 is part of the active site.

Belongs to the protein kinase superfamily. KdkA/RfaP family.

The protein resides in the cell inner membrane. The catalysed reaction is an alpha-Kdo-(2-&gt;6)-lipid IVA + ATP = a 4-O-phospho-alpha-Kdo-(2-&gt;6)-lipid IVA + ADP + H(+). The protein operates within bacterial outer membrane biogenesis; LPS core biosynthesis. Catalyzes the ATP-dependent phosphorylation of the 3-deoxy-D-manno-octulosonic acid (Kdo) residue in Kdo-lipid IV(A) at the 4-OH position. The sequence is that of 3-deoxy-D-manno-octulosonic acid kinase from Mannheimia succiniciproducens (strain KCTC 0769BP / MBEL55E).